We begin with the raw amino-acid sequence, 457 residues long: tRNA(Ile)-lysidine synthase (457 aa).

ATP is bound at residue Ser27–Ser32.

This sequence belongs to the tRNA(Ile)-lysidine synthase family.

Its subcellular location is the cytoplasm. It carries out the reaction cytidine(34) in tRNA(Ile2) + L-lysine + ATP = lysidine(34) in tRNA(Ile2) + AMP + diphosphate + H(+). Ligates lysine onto the cytidine present at position 34 of the AUA codon-specific tRNA(Ile) that contains the anticodon CAU, in an ATP-dependent manner. Cytidine is converted to lysidine, thus changing the amino acid specificity of the tRNA from methionine to isoleucine. In Hamiltonella defensa subsp. Acyrthosiphon pisum (strain 5AT), this protein is tRNA(Ile)-lysidine synthase.